Reading from the N-terminus, the 357-residue chain is Carbamoyl phosphate synthase small chain (357 aa).

Residues 1–168 form a CPSase region; sequence MSKRLLILED…STTTAYPSPN (168 aa). L-glutamine-binding residues include serine 46, glycine 220, and glycine 222. In terms of domain architecture, Glutamine amidotransferase type-1 spans 172-357; sequence KVVVVDFGLK…FMDLMDNFKK (186 aa). Cysteine 247 acts as the Nucleophile in catalysis. The L-glutamine site is built by leucine 248, glutamine 251, asparagine 289, glycine 291, and tyrosine 292. Catalysis depends on residues histidine 331 and aspartate 333.

This sequence belongs to the CarA family. As to quaternary structure, composed of two chains; the small (or glutamine) chain promotes the hydrolysis of glutamine to ammonia, which is used by the large (or ammonia) chain to synthesize carbamoyl phosphate. Tetramer of heterodimers (alpha,beta)4.

The catalysed reaction is hydrogencarbonate + L-glutamine + 2 ATP + H2O = carbamoyl phosphate + L-glutamate + 2 ADP + phosphate + 2 H(+). The enzyme catalyses L-glutamine + H2O = L-glutamate + NH4(+). It participates in amino-acid biosynthesis; L-arginine biosynthesis; carbamoyl phosphate from bicarbonate: step 1/1. The protein operates within pyrimidine metabolism; UMP biosynthesis via de novo pathway; (S)-dihydroorotate from bicarbonate: step 1/3. In terms of biological role, small subunit of the glutamine-dependent carbamoyl phosphate synthetase (CPSase). CPSase catalyzes the formation of carbamoyl phosphate from the ammonia moiety of glutamine, carbonate, and phosphate donated by ATP, constituting the first step of 2 biosynthetic pathways, one leading to arginine and/or urea and the other to pyrimidine nucleotides. The small subunit (glutamine amidotransferase) binds and cleaves glutamine to supply the large subunit with the substrate ammonia. The sequence is that of Carbamoyl phosphate synthase small chain from Lactococcus lactis subsp. lactis (strain IL1403) (Streptococcus lactis).